The chain runs to 96 residues: Small ribosomal subunit protein bS6 (96 aa).

Belongs to the bacterial ribosomal protein bS6 family.

Binds together with bS18 to 16S ribosomal RNA. The chain is Small ribosomal subunit protein bS6 from Bacillus cereus (strain ATCC 10987 / NRS 248).